We begin with the raw amino-acid sequence, 284 residues long: Bifunctional protein FolD (284 aa).

NADP(+) contacts are provided by residues 164-166 (GRS) and serine 189.

The protein belongs to the tetrahydrofolate dehydrogenase/cyclohydrolase family. Homodimer.

It carries out the reaction (6R)-5,10-methylene-5,6,7,8-tetrahydrofolate + NADP(+) = (6R)-5,10-methenyltetrahydrofolate + NADPH. The enzyme catalyses (6R)-5,10-methenyltetrahydrofolate + H2O = (6R)-10-formyltetrahydrofolate + H(+). The protein operates within one-carbon metabolism; tetrahydrofolate interconversion. Its function is as follows. Catalyzes the oxidation of 5,10-methylenetetrahydrofolate to 5,10-methenyltetrahydrofolate and then the hydrolysis of 5,10-methenyltetrahydrofolate to 10-formyltetrahydrofolate. This is Bifunctional protein FolD from Listeria innocua serovar 6a (strain ATCC BAA-680 / CLIP 11262).